The chain runs to 365 residues: Probable dual-specificity RNA methyltransferase RlmN (365 aa).

Glutamate 108 acts as the Proton acceptor in catalysis. One can recognise a Radical SAM core domain in the interval 114-352; that stretch reads YPDRNTVCIS…SCTVRDTRGR (239 aa). Cysteines 121 and 358 form a disulfide. 3 residues coordinate [4Fe-4S] cluster: cysteine 128, cysteine 132, and cysteine 135. S-adenosyl-L-methionine contacts are provided by residues 179–180, serine 213, 236–238, and asparagine 315; these read GE and SLH. The active-site S-methylcysteine intermediate is cysteine 358.

This sequence belongs to the radical SAM superfamily. RlmN family. The cofactor is [4Fe-4S] cluster.

Its subcellular location is the cytoplasm. It carries out the reaction adenosine(2503) in 23S rRNA + 2 reduced [2Fe-2S]-[ferredoxin] + 2 S-adenosyl-L-methionine = 2-methyladenosine(2503) in 23S rRNA + 5'-deoxyadenosine + L-methionine + 2 oxidized [2Fe-2S]-[ferredoxin] + S-adenosyl-L-homocysteine. It catalyses the reaction adenosine(37) in tRNA + 2 reduced [2Fe-2S]-[ferredoxin] + 2 S-adenosyl-L-methionine = 2-methyladenosine(37) in tRNA + 5'-deoxyadenosine + L-methionine + 2 oxidized [2Fe-2S]-[ferredoxin] + S-adenosyl-L-homocysteine. Functionally, specifically methylates position 2 of adenine 2503 in 23S rRNA and position 2 of adenine 37 in tRNAs. This chain is Probable dual-specificity RNA methyltransferase RlmN, found in Mycolicibacterium gilvum (strain PYR-GCK) (Mycobacterium gilvum (strain PYR-GCK)).